Reading from the N-terminus, the 310-residue chain is Nucleotide-binding protein BAD_0837 (310 aa).

31-38 (GMSGAGRS) provides a ligand contact to ATP. A GTP-binding site is contributed by 82–85 (DVRS).

Belongs to the RapZ-like family.

Functionally, displays ATPase and GTPase activities. The polypeptide is Nucleotide-binding protein BAD_0837 (Bifidobacterium adolescentis (strain ATCC 15703 / DSM 20083 / NCTC 11814 / E194a)).